Here is a 235-residue protein sequence, read N- to C-terminus: MKYRRVLLKLSGEALMGDREFGIDPEVVKSLAGEIARVVEAGTELAVVVGGGNIFRGVKASSSGMDRATADYVGMLATVMNALTLQDALEQQFQVQTRLLSAIEMKEVAEPFIRRRAMRHLEKGRVVIFGAGSGNPFFTTDTTAALRAAEIDAQVIFKATRVDGIYDSDPKFNPQAVRFEKITFHEVLVQNLRVMDSTAIALCRENNIPILVFNVFEKNSIYRAVQGEAVGTYVC.

9 to 12 (KLSG) serves as a coordination point for ATP. Gly-51 serves as a coordination point for UMP. Residues Gly-52 and Arg-56 each contribute to the ATP site. UMP is bound by residues Asp-71 and 133-140 (SGNPFFTT). Residues Thr-160, Tyr-166, and Asp-169 each contribute to the ATP site.

Belongs to the UMP kinase family. As to quaternary structure, homohexamer.

The protein localises to the cytoplasm. The catalysed reaction is UMP + ATP = UDP + ADP. The protein operates within pyrimidine metabolism; CTP biosynthesis via de novo pathway; UDP from UMP (UMPK route): step 1/1. Inhibited by UTP. In terms of biological role, catalyzes the reversible phosphorylation of UMP to UDP. This chain is Uridylate kinase, found in Gloeobacter violaceus (strain ATCC 29082 / PCC 7421).